Here is a 141-residue protein sequence, read N- to C-terminus: Regulator of ribonuclease activity B (141 aa).

Over residues 119–132 (DEDFDDEDDDEDYD) the composition is skewed to acidic residues. The interval 119-141 (DEDFDDEDDDEDYDKDGFPIERH) is disordered.

Belongs to the RraB family. As to quaternary structure, interacts with the C-terminal region of Rne.

The protein localises to the cytoplasm. In terms of biological role, globally modulates RNA abundance by binding to RNase E (Rne) and regulating its endonucleolytic activity. Can modulate Rne action in a substrate-dependent manner by altering the composition of the degradosome. This is Regulator of ribonuclease activity B from Shewanella amazonensis (strain ATCC BAA-1098 / SB2B).